We begin with the raw amino-acid sequence, 406 residues long: Angiopoietin-related protein 4 (406 aa).

The signal sequence occupies residues 1–25; the sequence is MSGAPTAGAALMLCAATAVLLSAQG. Residues 100-143 adopt a coiled-coil conformation; it reads EVLHSLQTQLKAQNSRIQQLFHKVAQQQRHLEKQHLRIQHLQSQ. N177 carries an N-linked (GlcNAc...) asparagine glycan. One can recognise a Fibrinogen C-terminal domain in the interval 179 to 401; that stretch reads SRLHRLPRDC…ATTMLIQPMA (223 aa). 2 disulfides stabilise this stretch: C188–C216 and C341–C354.

In terms of assembly, homooligomer; disulfide-linked via Cys residues in the N-terminal part of the protein. The homooligomer undergoes proteolytic processing to release the ANGPTL4 C-terminal chain, which circulates as a monomer. The homooligomer unprocessed form is able to interact with the extracellular matrix. Post-translationally, N-glycosylated. Forms disulfide-linked dimers and tetramers. In terms of processing, cleaved into a smaller N-terminal chain and a larger chain that contains the fibrinogen C-terminal domain; both cleaved and uncleaved forms are detected in the extracellular space. The cleaved form is not present within the cell. As to expression, detected in blood plasma (at protein level). Detected in liver. Detected in white fat tissue and placenta. Expressed at high levels in the placenta, heart, liver, muscle, pancreas and lung but expressed poorly in the brain and kidney.

The protein resides in the secreted. It is found in the extracellular space. It localises to the extracellular matrix. Functionally, mediates inactivation of the lipoprotein lipase LPL, and thereby plays a role in the regulation of triglyceride clearance from the blood serum and in lipid metabolism. May also play a role in regulating glucose homeostasis and insulin sensitivity. Inhibits proliferation, migration, and tubule formation of endothelial cells and reduces vascular leakage. Upon heterologous expression, inhibits the adhesion of endothelial cell to the extracellular matrix (ECM), and inhibits the reorganization of the actin cytoskeleton, formation of actin stress fibers and focal adhesions in endothelial cells that have adhered to ANGPTL4-containing ECM (in vitro). Depending on context, may modulate tumor-related angiogenesis. In terms of biological role, mediates inactivation of the lipoprotein lipase LPL, and thereby plays an important role in the regulation of triglyceride clearance from the blood serum and in lipid metabolism. Has higher activity in LPL inactivation than the uncleaved protein. The protein is Angiopoietin-related protein 4 (ANGPTL4) of Homo sapiens (Human).